Reading from the N-terminus, the 379-residue chain is Guanine nucleotide-binding protein G(s) subunit alpha (379 aa).

In terms of domain architecture, G-alpha spans 38–379 (STHRLLLLGA…RMHLRQYELL (342 aa)). Residues 41–54 (RLLLLGAGESGKST) are G1 motif. GTP is bound by residues 46-53 (GAGESGKS), 182-188 (LRCRVLT), 207-211 (DVGGQ), 276-279 (NKQD), and alanine 351. Residues serine 53 and threonine 188 each coordinate Mg(2+). The tract at residues 180 to 188 (DILRCRVLT) is G2 motif. The tract at residues 203–212 (FHMFDVGGQR) is G3 motif. Residues 272–279 (ILFLNKQD) form a G4 motif region. The interval 349–354 (TCAVDT) is G5 motif.

It belongs to the G-alpha family. G(s) subfamily. In terms of assembly, g proteins are composed of 3 units; alpha, beta and gamma. The alpha chain contains the guanine nucleotide binding site.

Its function is as follows. Guanine nucleotide-binding proteins (G proteins) are involved as modulators or transducers in various transmembrane signaling systems. The G(s) protein is involved in hormonal regulation of adenylate cyclase: it activates the cyclase in response to beta-adrenergic stimuli. This Schistosoma mansoni (Blood fluke) protein is Guanine nucleotide-binding protein G(s) subunit alpha.